The primary structure comprises 454 residues: tRNA modification GTPase MnmE (454 aa).

(6S)-5-formyl-5,6,7,8-tetrahydrofolate contacts are provided by R23, E80, and K120. The TrmE-type G domain occupies 216–377 (GMKVVIAGRP…LRDHLKQSMG (162 aa)). N226 provides a ligand contact to K(+). GTP contacts are provided by residues 226 to 231 (NAGKSS), 245 to 251 (TDIAGTT), 270 to 273 (DTAG), 335 to 338 (NKAD), and 358 to 360 (SAR). Residue S230 participates in Mg(2+) binding. T245, I247, and T250 together coordinate K(+). Residue T251 participates in Mg(2+) binding. Position 454 (K454) interacts with (6S)-5-formyl-5,6,7,8-tetrahydrofolate.

This sequence belongs to the TRAFAC class TrmE-Era-EngA-EngB-Septin-like GTPase superfamily. TrmE GTPase family. As to quaternary structure, homodimer. Heterotetramer of two MnmE and two MnmG subunits. The cofactor is K(+).

Its subcellular location is the cytoplasm. In terms of biological role, exhibits a very high intrinsic GTPase hydrolysis rate. Involved in the addition of a carboxymethylaminomethyl (cmnm) group at the wobble position (U34) of certain tRNAs, forming tRNA-cmnm(5)s(2)U34. This is tRNA modification GTPase MnmE from Yersinia pestis.